Reading from the N-terminus, the 1351-residue chain is MSSETGLGTRLRATSGMGDGIEGAQMLGQHQPALPQPQATVMNNPDPPEITRPNQPKRQTNQLQYLLKAVLKTLWKHQFAWPFQLPVDVVKLNLPDYHKIIKTPMDMGTIKKRLENHYYWNAQECIQDFNTMFTNCYIYNKPGDDIVLMAEALEKLFLQKISEMPQEETELTVVQSKGRGRGRKEQDASITPMRTRVLSGSLEDKSTVKPPVTPVSKPSTPTPPTVTRAPTPPQTRPQQGRPPAIAQAPIRFSPTISQDVVVPTTVAPTLVPPPLSNHPAVIHTAAQPAKTKKGVKRKADTTTPTTHDPLHESSPLPSDPKPPRAVPRKENGRQIRPTKKTEVPDSQLPAPPVLHPQPAPNAERDTKTSEQLRYCASIIREMFSKKHQAYAWPFYKPVDVEALGLHDYCEIIKHPMDLGTIKVKMENRDYKEAQEFASDVRLMFSNCYKYNPPDHEVVIMARKLQDVFEMRFAKMPDEPEEAPAPVPSLAPGPPAPSIKGPPPTSSDSSSDSTSDSESSSDSEEERAQRLAELQEQLKAVHEQLAALSQPQPNKPKKKEREKRKEKHKRKEEVEEPRKGRIREPPAKKPKKSVQGSGGTPSIKKEAPPPAPRPARPAPPSAPCESSEEETQRCRPMSYEEKRQLSLDINKLPGEKLGRVVHIIQSREPSLKNSNPDEIEIDFETLKPSTLRELERYVTSCLRKKRKSQDKIEAPTSGTVKVKGYSSSESESSSESSTSDSEESDSETAPNQKKKGHSGRESRKHHHPMQQPLAAQLPVMKPPSPTIAPSYPLPSSLDSSHISLHHPLHPANVFDAVMQLPPDLPPHLTGQTEHCSPPHLNQHALTSPPALHNAMPQQPSRPSNRAAALPTKPAMPPSASPPPPAPQPPQQPHVHHHHHHHAQPPHVLLEDDEPPSPLTGLPPYLQPLQKSQQPPTQSPIHSLLTSVKVQSQTPMAAPPQSMRHLQPLVYPPPPSTATTAPPPASSHIHQLQSSPVVPQQLPAGQAPPPPQQQQQHPALQGTLVSSHQQHVQHQHAKQQQVIQHHHHHPSPRQQKQETYPGGHLRDAPSPLLLHSPPVPPYPGLTHPPSPQSVQPKKQEIRGASVLQPQPVVMKEDKRHSPSIRPEGFSPGMRPEPQKVPEVLKGPSHIQPRPDLKKMDGGRPIRLPDQSLPPQGMPEKEKQKQEPKTPVAPKKDIKIKNMGSWAGLMQKPPVTPTSAGKSTSDSFELFRRQAREKEERERALKLQAEQAERVRREQDRMSRTREDDEVQDQARKAHEEARRRQEQQQQQQHVQSNLPTAPSPAQSSQPMMDQREMARKREQERRRRQAMAPSIDMNFQSELMEIFEQNLFS.

Disordered regions lie at residues 1–23, 35–58, 168–244, 285–368, 478–638, 700–799, and 821–1334; these read MSSE…GIEG, PQPQ…QPKR, ETEL…RPPA, AAQP…DTKT, EPEE…PMSY, CLRK…LDSS, and PDLP…PSID. Residues 58-164 enclose the Bromo 1 domain; sequence RQTNQLQYLL…KLFLQKISEM (107 aa). Residues 208 to 219 are compositionally biased toward low complexity; sequence VKPPVTPVSKPS. Positions 220–235 are enriched in pro residues; it reads TPTPPTVTRAPTPPQT. Residues 327–343 are compositionally biased toward basic and acidic residues; that stretch reads PRKENGRQIRPTKKTEV. The segment covering 349–359 has biased composition (pro residues); that stretch reads PAPPVLHPQPA. One can recognise a Bromo 2 domain in the interval 366 to 475; sequence TKTSEQLRYC…DVFEMRFAKM (110 aa). Residues 482–504 are compositionally biased toward pro residues; the sequence is APAPVPSLAPGPPAPSIKGPPPT. The segment at 504-522 is NPS region; sequence TSSDSSSDSTSDSESSSDS. Residues 505–517 are compositionally biased toward low complexity; it reads SSDSSSDSTSDSE. A BID region region spans residues 543–598; it reads QLAALSQPQPNKPKKKEREKRKEKHKRKEEVEEPRKGRIREPPAKKPKKSVQGSGG. Residues 554–569 are compositionally biased toward basic residues; that stretch reads KPKKKEREKRKEKHKR. The segment covering 570 to 586 has biased composition (basic and acidic residues); the sequence is KEEVEEPRKGRIREPPA. The span at 607 to 621 shows a compositional bias: pro residues; sequence PPPAPRPARPAPPSA. The NET domain occupies 624-708; sequence ESSEEETQRC…SCLRKKRKSQ (85 aa). The span at 629–638 shows a compositional bias: basic and acidic residues; that stretch reads ETQRCRPMSY. Residues 725–738 show a composition bias toward low complexity; it reads SSSESESSSESSTS. Residues 751-767 show a composition bias toward basic residues; sequence QKKKGHSGRESRKHHHP. Residues 788–799 are compositionally biased toward low complexity; sequence PSYPLPSSLDSS. Positions 872-890 are enriched in pro residues; the sequence is PAMPPSASPPPPAPQPPQQ. Basic residues predominate over residues 892 to 902; sequence HVHHHHHHHAQ. Over residues 927-953 the composition is skewed to polar residues; that stretch reads LQKSQQPPTQSPIHSLLTSVKVQSQTP. Pro residues predominate over residues 968–983; sequence VYPPPPSTATTAPPPA. 2 stretches are compositionally biased toward low complexity: residues 994–1003 and 1011–1028; these read PVVPQQLPAG and QQQQ…SHQQ. A C-terminal (CTD) region region spans residues 1051–1350; sequence RQQKQETYPG…LMEIFEQNLF (300 aa). The span at 1075-1089 shows a compositional bias: pro residues; the sequence is PPVPPYPGLTHPPSP. Basic and acidic residues-rich tracts occupy residues 1150–1161 and 1176–1197; these read PRPDLKKMDGGR and PEKE…DIKI. Polar residues predominate over residues 1214-1224; that stretch reads PTSAGKSTSDS. The span at 1226-1284 shows a compositional bias: basic and acidic residues; sequence ELFRRQAREKEERERALKLQAEQAERVRREQDRMSRTREDDEVQDQARKAHEEARRRQE. The segment covering 1301-1310 has biased composition (low complexity); it reads SPAQSSQPMM. The segment covering 1311 to 1323 has biased composition (basic and acidic residues); sequence DQREMARKREQER.

This sequence belongs to the BET family.

Its subcellular location is the nucleus. The protein localises to the chromosome. Chromatin reader protein that recognizes and binds acetylated histones and plays a key role in transmission of epigenetic memory across cell divisions and transcription regulation. Remains associated with acetylated chromatin throughout the entire cell cycle and provides epigenetic memory for postmitotic G1 gene transcription by preserving acetylated chromatin status and maintaining high-order chromatin structure. During interphase, plays a key role in regulating the transcription of signal-inducible genes by associating with the P-TEFb complex and recruiting it to promoters. This chain is Bromodomain-containing protein 4A (brd4-a), found in Xenopus laevis (African clawed frog).